We begin with the raw amino-acid sequence, 318 residues long: Thymidylate synthase (318 aa).

DUMP is bound by residues R26 and 181–182 (RR). C201 functions as the Nucleophile in the catalytic mechanism. DUMP is bound by residues 221–224 (RSAD), N232, and 262–264 (HIY). D224 contributes to the (6R)-5,10-methylene-5,6,7,8-tetrahydrofolate binding site. A317 is a (6R)-5,10-methylene-5,6,7,8-tetrahydrofolate binding site.

The protein belongs to the thymidylate synthase family. Bacterial-type ThyA subfamily. Homodimer.

It is found in the cytoplasm. The catalysed reaction is dUMP + (6R)-5,10-methylene-5,6,7,8-tetrahydrofolate = 7,8-dihydrofolate + dTMP. The protein operates within pyrimidine metabolism; dTTP biosynthesis. Catalyzes the reductive methylation of 2'-deoxyuridine-5'-monophosphate (dUMP) to 2'-deoxythymidine-5'-monophosphate (dTMP) while utilizing 5,10-methylenetetrahydrofolate (mTHF) as the methyl donor and reductant in the reaction, yielding dihydrofolate (DHF) as a by-product. This enzymatic reaction provides an intracellular de novo source of dTMP, an essential precursor for DNA biosynthesis. The protein is Thymidylate synthase of Staphylococcus haemolyticus (strain JCSC1435).